Reading from the N-terminus, the 501-residue chain is Group 3 secretory phospholipase A2 (501 aa).

A signal peptide spans 1–19 (MGVLVVLLGVLSFLGRTLG). The tract at residues 119–139 (RGPAESPAGTREKRAAGQNGV) is disordered. The phospholipase A2-like stretch occupies residues 150–291 (GWTVPGTLWC…SWSSPATSLT (142 aa)). 3 residues coordinate Ca(2+): Trp158, Gly160, and Gly162. 4 disulfide bridges follow: Cys159-Cys181, Cys180-Cys220, Cys187-Cys213, and Cys211-Cys244. Asn167 is a glycosylation site (N-linked (GlcNAc...) asparagine). His184 is a catalytic residue. Asp185 contacts Ca(2+). Asp214 is an active-site residue. Asn280 carries an N-linked (GlcNAc...) asparagine glycan. Residues 284 to 298 (SSPATSLTPSPQNPA) show a composition bias toward polar residues. A disordered region spans residues 284-339 (SSPATSLTPSPQNPALSRPQPMQHPQQWPSEWKESKSPSKTNATALQAPVASPGSD). N-linked (GlcNAc...) asparagine glycosylation is found at Asn325 and Asn403.

This sequence belongs to the phospholipase A2 family. The cofactor is Ca(2+). Post-translationally, N-glycosylation does not affect the catalytic activity, but is required for proper secretion. A nonglycosylated form was observed in several cell types. In terms of processing, in several cell types, the N- and C-termini are cleaved off.

The protein resides in the secreted. It is found in the cell membrane. Its subcellular location is the cytoplasm. It localises to the cytoskeleton. The protein localises to the microtubule organizing center. The protein resides in the centrosome. It is found in the centriole. Its subcellular location is the recycling endosome. It catalyses the reaction a 1,2-diacyl-sn-glycero-3-phosphocholine + H2O = a 1-acyl-sn-glycero-3-phosphocholine + a fatty acid + H(+). The enzyme catalyses 1-hexadecanoyl-2-(9Z,12Z-octadecadienoyl)-sn-glycero-3-phosphocholine + H2O = (9Z,12Z)-octadecadienoate + 1-hexadecanoyl-sn-glycero-3-phosphocholine + H(+). The catalysed reaction is 1-hexadecanoyl-2-(5Z,8Z,11Z,14Z-eicosatetraenoyl)-sn-glycero-3-phosphocholine + H2O = 1-hexadecanoyl-sn-glycero-3-phosphocholine + (5Z,8Z,11Z,14Z)-eicosatetraenoate + H(+). It carries out the reaction 1-hexadecanoyl-2-(9Z,12Z-octadecadienoyl)-sn-glycero-3-phosphoethanolamine + H2O = 1-hexadecanoyl-sn-glycero-3-phosphoethanolamine + (9Z,12Z)-octadecadienoate + H(+). It catalyses the reaction 1-hexadecanoyl-2-(5Z,8Z,11Z,14Z-eicosatetraenoyl)-sn-glycero-3-phosphoethanolamine + H2O = 1-hexadecanoyl-sn-glycero-3-phosphoethanolamine + (5Z,8Z,11Z,14Z)-eicosatetraenoate + H(+). In terms of biological role, secretory calcium-dependent phospholipase A2 that primarily targets extracellular phospholipids. Hydrolyzes the ester bond of the fatty acyl group attached at sn-2 position of phospholipids without apparent head group selectivity. Contributes to phospholipid remodeling of low-density lipoprotein (LDL) and high-density lipoprotein (HDL) particles. Hydrolyzes LDL phospholipids releasing unsaturated fatty acids that regulate macrophage differentiation toward foam cells. May act in an autocrine and paracrine manner. Secreted by immature mast cells, acts on nearby fibroblasts upstream to PTDGS to synthesize prostaglandin D2 (PGD2), which in turn promotes mast cell maturation and degranulation via PTGDR. Secreted by epididymal epithelium, acts on immature sperm cells within the duct, modulating the degree of unsaturation of the fatty acyl components of phosphatidylcholines required for acrosome assembly and sperm cell motility. Facilitates the replacement of fatty acyl chains in phosphatidylcholines in sperm membranes from omega-6 and omega-9 to omega-3 polyunsaturated fatty acids (PUFAs). Coupled to lipoxygenase pathway, may process omega-6 PUFAs to generate oxygenated lipid mediators in the male reproductive tract. At pericentrosomal preciliary compartment, negatively regulates ciliogenesis likely by regulating endocytotic recycling of ciliary membrane protein. Coupled to cyclooxygenase pathway provides arachidonate to generate prostaglandin E2 (PGE2), a potent immunomodulatory lipid in inflammation and tumorigenesis. At colonic epithelial barrier, preferentially hydrolyzes phospholipids having arachidonate and docosahexaenoate at sn-2 position, contributing to the generation of oxygenated metabolites involved in colonic stem cell homeostasis. Releases C16:0 and C18:0 lysophosphatidylcholine subclasses from neuron plasma membranes and promotes neurite outgrowth and neuron survival. In Bos taurus (Bovine), this protein is Group 3 secretory phospholipase A2 (PLA2G3).